Here is a 201-residue protein sequence, read N- to C-terminus: dTTP/UTP pyrophosphatase (201 aa).

Residue D81 is the Proton acceptor of the active site.

It belongs to the Maf family. YhdE subfamily. A divalent metal cation serves as cofactor.

The protein localises to the cytoplasm. The enzyme catalyses dTTP + H2O = dTMP + diphosphate + H(+). It carries out the reaction UTP + H2O = UMP + diphosphate + H(+). Its function is as follows. Nucleoside triphosphate pyrophosphatase that hydrolyzes dTTP and UTP. May have a dual role in cell division arrest and in preventing the incorporation of modified nucleotides into cellular nucleic acids. The protein is dTTP/UTP pyrophosphatase of Bordetella avium (strain 197N).